A 325-amino-acid polypeptide reads, in one-letter code: Tagatose 1,6-diphosphate aldolase 1 (325 aa).

Belongs to the aldolase LacD family.

The catalysed reaction is D-tagatofuranose 1,6-bisphosphate = D-glyceraldehyde 3-phosphate + dihydroxyacetone phosphate. The protein operates within carbohydrate metabolism; D-tagatose 6-phosphate degradation; D-glyceraldehyde 3-phosphate and glycerone phosphate from D-tagatose 6-phosphate: step 2/2. The polypeptide is Tagatose 1,6-diphosphate aldolase 1 (lacD1) (Enterococcus faecalis (strain ATCC 700802 / V583)).